Here is a 142-residue protein sequence, read N- to C-terminus: Gene 46 protein (142 aa).

The interval 82 to 101 (KALAQVKPETGPSRPNRKKL) is disordered.

The chain is Gene 46 protein (46) from Mycobacterium (Mycobacteriophage L5).